The primary structure comprises 880 residues: Alanine--tRNA ligase (880 aa).

Residues histidine 569, histidine 573, cysteine 671, and histidine 675 each contribute to the Zn(2+) site.

The protein belongs to the class-II aminoacyl-tRNA synthetase family. As to quaternary structure, homotetramer. Zn(2+) is required as a cofactor.

Its subcellular location is the cytoplasm. It carries out the reaction tRNA(Ala) + L-alanine + ATP = L-alanyl-tRNA(Ala) + AMP + diphosphate. Functionally, catalyzes the attachment of alanine to tRNA(Ala) in a two-step reaction: alanine is first activated by ATP to form Ala-AMP and then transferred to the acceptor end of tRNA(Ala). Also edits incorrectly charged Ser-tRNA(Ala) and Gly-tRNA(Ala) via its editing domain. The chain is Alanine--tRNA ligase from Buchnera aphidicola subsp. Baizongia pistaciae (strain Bp).